A 195-amino-acid polypeptide reads, in one-letter code: Glycerol-3-phosphate acyltransferase (195 aa).

A run of 5 helical transmembrane segments spans residues 7–27 (IFIL…SYVI), 52–72 (LALL…AIAQ), 80–100 (ILFL…YLFF), 113–133 (LIFI…ICFL), and 147–167 (LIAL…IFTI).

It belongs to the PlsY family. Probably interacts with PlsX.

The protein resides in the cell inner membrane. The catalysed reaction is an acyl phosphate + sn-glycerol 3-phosphate = a 1-acyl-sn-glycero-3-phosphate + phosphate. It participates in lipid metabolism; phospholipid metabolism. Its function is as follows. Catalyzes the transfer of an acyl group from acyl-phosphate (acyl-PO(4)) to glycerol-3-phosphate (G3P) to form lysophosphatidic acid (LPA). This enzyme utilizes acyl-phosphate as fatty acyl donor, but not acyl-CoA or acyl-ACP. This is Glycerol-3-phosphate acyltransferase from Ehrlichia ruminantium (strain Welgevonden).